We begin with the raw amino-acid sequence, 109 residues long: Parvalbumin, muscle (109 aa).

Residue A1 is modified to N-acetylalanine. EF-hand domains follow at residues 38-73 and 77-109; these read KSPE…FTPD and LSDK…VAES. Residues D51, D53, S55, E62, D90, D92, D94, K96, and E101 each contribute to the Ca(2+) site.

Belongs to the parvalbumin family.

Its function is as follows. In muscle, parvalbumin is thought to be involved in relaxation after contraction. It binds two calcium ions. The chain is Parvalbumin, muscle from Gallus gallus (Chicken).